Reading from the N-terminus, the 271-residue chain is Short chain dehydrogenase virK (271 aa).

Positions 13, 59, 87, 168, 172, 201, and 203 each coordinate NADP(+). Y168 (proton donor) is an active-site residue. K172 serves as the catalytic Lowers pKa of active site Tyr.

This sequence belongs to the short-chain dehydrogenases/reductases (SDR) family.

It participates in secondary metabolite biosynthesis. Short chain dehydrogenase; part of the gene cluster that mediates the biosynthesis of virensols and trichoxide, fungal natural products that contain or are derived from a salicylaldehyde core. The pathway begins with the synthesis of the reduced chain in virensol C by the highly reducing polyketide synthase virA via condensation of one acetate and 8 malonate units. VirA has interesting programming rules since the first 2 ketides are fully reduced, the 3 following ketides undergo beta-dehydration, and the last 3 ketides are only reduced to beta-hydroxys to yield the trihydroxy portion. The production of aldehyde virensol C by virA alone is surprising, since virA does not contain a reductase (R) domain that is typically associated with reductive product release in HRPKS. The cupin-domain enzyme virC is involved in enhancing virA product turnover. The short-chain dehydrogenase virB then oxidizes the C-7 alcohol of virensol C to a ketone, yielding virensol D. Virensol D is further transformed to salicylaldehyde 5-deoxyaurocitrin by the short-chain dehydrogenase virD. VirD catalyzes the dehydrogenation of C-3 to form the beta-ketone aldehyde, which is followed by the generation of the nucleophilic C-2 that is required for the intramolecular aldol condensation between C-2 and C-7, itself followed by dehydration and aromatization which leads to salicylaldehyde 5-deoxyaurocitrin. While the dehydrogenation of virensol D is definitely catalyzed by virD, the aldol condensation and dehydration may be uncatalyzed or assisted by virD. The short chain dehydrogenase virG then converts salicylaldehyde 5-deoxyaurocitrin into virensol B which is further hydroxylated by the cytochrome P450 monooxygenase virE to yield the hydroquinone virensol A. VirI then may oxidize virensol A to form the quinone, while virH performs the epoxidation. Finally, the two remaining short-chain dehydrogenases, virK and virL, are probably responsible for reducing the ketones to the corresponding alcohols to furnish the epoxycyclohexanol structure in trichoxide. The sequence is that of Short chain dehydrogenase virK from Hypocrea virens (strain Gv29-8 / FGSC 10586) (Gliocladium virens).